The chain runs to 254 residues: Ferritin, chloroplastic (254 aa).

The N-terminal 48 residues, 1–48, are a transit peptide targeting the chloroplast; that stretch reads MALAPSKVSPFSGFSLSDGVGAVRNPTCSVSLSFLNKKVGSRNLGVSA. The extension peptide (EP) stretch occupies residues 49–81; sequence STVPLTGVIFEPFEEVKKEELAVPTAGQVSLAR. One can recognise a Ferritin-like diiron domain in the interval 82 to 235; it reads QYYADECESA…EYVAQLRMVG (154 aa). Residues glutamate 99, glutamate 134, histidine 137, glutamate 183, and glutamine 217 each coordinate Fe cation.

It belongs to the ferritin family. In terms of assembly, oligomer of 24 subunits. There are two types of subunits: L (light) chain and H (heavy) chain. The major chain can be light or heavy, depending on the species and tissue type. The functional molecule forms a roughly spherical shell with a diameter of 12 nm and contains a central cavity into which the insoluble mineral iron core is deposited.

Its subcellular location is the plastid. It localises to the chloroplast. The enzyme catalyses 4 Fe(2+) + O2 + 4 H(+) = 4 Fe(3+) + 2 H2O. Stores iron in a soluble, non-toxic, readily available form. Important for iron homeostasis. Has ferroxidase activity. Iron is taken up in the ferrous form and deposited as ferric hydroxides after oxidation. This chain is Ferritin, chloroplastic (PFE), found in Phaseolus vulgaris (Kidney bean).